The sequence spans 187 residues: Ribosome-recycling factor (187 aa).

This sequence belongs to the RRF family.

The protein resides in the cytoplasm. Functionally, responsible for the release of ribosomes from messenger RNA at the termination of protein biosynthesis. May increase the efficiency of translation by recycling ribosomes from one round of translation to another. The sequence is that of Ribosome-recycling factor from Orientia tsutsugamushi (strain Boryong) (Rickettsia tsutsugamushi).